The sequence spans 444 residues: Ribulose bisphosphate carboxylase (444 aa).

Lysine 163 (proton acceptor) is an active-site residue. Lysine 165 is a substrate binding site. Residues lysine 189, aspartate 191, and glutamate 192 each coordinate Mg(2+). An N6-carboxylysine modification is found at lysine 189. The active-site Proton acceptor is the histidine 281. Residues arginine 282, histidine 314, serine 367–glycine 369, and glutamine 389–glycine 392 each bind substrate.

It belongs to the RuBisCO large chain family. Type III subfamily. Homodimer or homodecamer. In contrast to form I RuBisCO, the form III RuBisCO is composed solely of large subunits. Mg(2+) serves as cofactor.

It catalyses the reaction 2 (2R)-3-phosphoglycerate + 2 H(+) = D-ribulose 1,5-bisphosphate + CO2 + H2O. It carries out the reaction D-ribulose 1,5-bisphosphate + O2 = 2-phosphoglycolate + (2R)-3-phosphoglycerate + 2 H(+). Catalyzes the addition of molecular CO(2) and H(2)O to ribulose 1,5-bisphosphate (RuBP), generating two molecules of 3-phosphoglycerate (3-PGA). Functions in an archaeal AMP degradation pathway, together with AMP phosphorylase and R15P isomerase. This chain is Ribulose bisphosphate carboxylase, found in Thermococcus onnurineus (strain NA1).